The chain runs to 420 residues: Serine--tRNA ligase (420 aa).

Residue 227–229 coordinates L-serine; sequence TSE. ATP-binding positions include 258–260 and valine 274; that span reads RRE. L-serine is bound at residue glutamate 281. 345-348 contributes to the ATP binding site; it reads ELTS. L-serine is bound at residue threonine 380.

It belongs to the class-II aminoacyl-tRNA synthetase family. Type-1 seryl-tRNA synthetase subfamily. As to quaternary structure, homodimer. The tRNA molecule binds across the dimer.

The protein resides in the cytoplasm. The catalysed reaction is tRNA(Ser) + L-serine + ATP = L-seryl-tRNA(Ser) + AMP + diphosphate + H(+). The enzyme catalyses tRNA(Sec) + L-serine + ATP = L-seryl-tRNA(Sec) + AMP + diphosphate + H(+). The protein operates within aminoacyl-tRNA biosynthesis; selenocysteinyl-tRNA(Sec) biosynthesis; L-seryl-tRNA(Sec) from L-serine and tRNA(Sec): step 1/1. Catalyzes the attachment of serine to tRNA(Ser). Is also able to aminoacylate tRNA(Sec) with serine, to form the misacylated tRNA L-seryl-tRNA(Sec), which will be further converted into selenocysteinyl-tRNA(Sec). The protein is Serine--tRNA ligase of Nocardia farcinica (strain IFM 10152).